A 274-amino-acid polypeptide reads, in one-letter code: Malonyl-[acyl-carrier protein] O-methyltransferase (274 aa).

It belongs to the methyltransferase superfamily.

The catalysed reaction is malonyl-[ACP] + S-adenosyl-L-methionine = malonyl-[ACP] methyl ester + S-adenosyl-L-homocysteine. Its pathway is cofactor biosynthesis; biotin biosynthesis. Its function is as follows. Converts the free carboxyl group of a malonyl-thioester to its methyl ester by transfer of a methyl group from S-adenosyl-L-methionine (SAM). It allows to synthesize pimeloyl-ACP via the fatty acid synthetic pathway. The sequence is that of Malonyl-[acyl-carrier protein] O-methyltransferase from Priestia megaterium (strain DSM 319 / IMG 1521) (Bacillus megaterium).